The chain runs to 199 residues: Protein GrpE (199 aa).

The span at 1–24 (MSKQNKKDWKKFRDEHKEEHKVEN) shows a compositional bias: basic and acidic residues. A disordered region spans residues 1–52 (MSKQNKKDWKKFRDEHKEEHKVENEILEEETDEESQHQEPALGHPSYTALEE).

Belongs to the GrpE family. Homodimer.

Its subcellular location is the cytoplasm. Functionally, participates actively in the response to hyperosmotic and heat shock by preventing the aggregation of stress-denatured proteins, in association with DnaK and GrpE. It is the nucleotide exchange factor for DnaK and may function as a thermosensor. Unfolded proteins bind initially to DnaJ; upon interaction with the DnaJ-bound protein, DnaK hydrolyzes its bound ATP, resulting in the formation of a stable complex. GrpE releases ADP from DnaK; ATP binding to DnaK triggers the release of the substrate protein, thus completing the reaction cycle. Several rounds of ATP-dependent interactions between DnaJ, DnaK and GrpE are required for fully efficient folding. This Legionella pneumophila (strain Lens) protein is Protein GrpE.